The sequence spans 394 residues: Protein TsgA homolog (394 aa).

A run of 12 helical transmembrane segments spans residues 11–31 (WISY…GMVM), 51–71 (FLNA…EIIP), 76–96 (LMFG…GKSL), 101–121 (LCMF…TFLI), 134–154 (LLFT…VAAM), 162–182 (WYWV…LTLF), 206–226 (IGVL…LGFI), 251–271 (FWTS…FFDL), 274–294 (IVTI…STDN), 302–322 (IMAL…LGSL), 334–354 (FILT…GPIV), and 363–383 (LTTA…LGFV).

Belongs to the major facilitator superfamily. TsgA family.

Its subcellular location is the cell inner membrane. The sequence is that of Protein TsgA homolog from Serratia proteamaculans (strain 568).